A 338-amino-acid chain; its full sequence is Ketol-acid reductoisomerase (NADP(+)) (338 aa).

Residues 1–181 (MNVYYDKDCD…GGGRSGIIET (181 aa)) enclose the KARI N-terminal Rossmann domain. NADP(+)-binding positions include 24–27 (YGSQ), arginine 47, serine 50, serine 52, and 82–85 (DEFQ). Histidine 107 is an active-site residue. NADP(+) is bound at residue glycine 133. One can recognise a KARI C-terminal knotted domain in the interval 182–327 (TFKDETETDL…AKLRGMMPWI (146 aa)). Residues aspartate 190, glutamate 194, glutamate 226, and glutamate 230 each coordinate Mg(2+). Position 251 (serine 251) interacts with substrate.

The protein belongs to the ketol-acid reductoisomerase family. The cofactor is Mg(2+).

It carries out the reaction (2R)-2,3-dihydroxy-3-methylbutanoate + NADP(+) = (2S)-2-acetolactate + NADPH + H(+). It catalyses the reaction (2R,3R)-2,3-dihydroxy-3-methylpentanoate + NADP(+) = (S)-2-ethyl-2-hydroxy-3-oxobutanoate + NADPH + H(+). It functions in the pathway amino-acid biosynthesis; L-isoleucine biosynthesis; L-isoleucine from 2-oxobutanoate: step 2/4. Its pathway is amino-acid biosynthesis; L-valine biosynthesis; L-valine from pyruvate: step 2/4. Its function is as follows. Involved in the biosynthesis of branched-chain amino acids (BCAA). Catalyzes an alkyl-migration followed by a ketol-acid reduction of (S)-2-acetolactate (S2AL) to yield (R)-2,3-dihydroxy-isovalerate. In the isomerase reaction, S2AL is rearranged via a Mg-dependent methyl migration to produce 3-hydroxy-3-methyl-2-ketobutyrate (HMKB). In the reductase reaction, this 2-ketoacid undergoes a metal-dependent reduction by NADPH to yield (R)-2,3-dihydroxy-isovalerate. The chain is Ketol-acid reductoisomerase (NADP(+)) from Psychrobacter cryohalolentis (strain ATCC BAA-1226 / DSM 17306 / VKM B-2378 / K5).